Reading from the N-terminus, the 72-residue chain is Translation initiation factor IF-1 (72 aa).

The S1-like domain maps to 1–72 (MAKDDVIVVD…DKGRITHRYK (72 aa)).

Belongs to the IF-1 family. As to quaternary structure, component of the 30S ribosomal translation pre-initiation complex which assembles on the 30S ribosome in the order IF-2 and IF-3, IF-1 and N-formylmethionyl-tRNA(fMet); mRNA recruitment can occur at any time during PIC assembly.

It is found in the cytoplasm. Its function is as follows. One of the essential components for the initiation of protein synthesis. Stabilizes the binding of IF-2 and IF-3 on the 30S subunit to which N-formylmethionyl-tRNA(fMet) subsequently binds. Helps modulate mRNA selection, yielding the 30S pre-initiation complex (PIC). Upon addition of the 50S ribosomal subunit IF-1, IF-2 and IF-3 are released leaving the mature 70S translation initiation complex. The chain is Translation initiation factor IF-1 from Aliarcobacter butzleri (strain RM4018) (Arcobacter butzleri).